The primary structure comprises 587 residues: Proline-rich protein 14 (587 aa).

At Met1 the chain carries N-acetylmethionine. Over residues 1-11 (MDLPGDSSTPG) the composition is skewed to polar residues. Disordered regions lie at residues 1 to 48 (MDLP…EKAS), 65 to 152 (VPLE…HQPT), and 181 to 241 (ARRA…RPRL). The segment at 1–135 (MDLPGDSSTP…TPRRQSRTTP (135 aa)) is sufficient for heterochromatin association in interphase and chromatin association in anaphase. Residues 85–378 (SVRSQPPASP…MAKAPPPPRP (294 aa)) are required for the interaction with GRB2 and sufficient to promote the phosphorylation of AKT and cell proliferation. The required for nuclear lamina association stretch occupies residues 136-365 (GPDEGPSQKV…RPRPRRHTVG (230 aa)). A compositionally biased stretch (low complexity) spans 200-214 (LPAPSRPSALSANPL). The segment covering 215–234 (ASPPPAPDPVLEPPSTPPPS) has biased composition (pro residues). Ser277 carries the phosphoserine modification. 2 disordered regions span residues 290 to 444 (EAGQ…IGKV) and 524 to 587 (FRDS…PHRT). A compositionally biased stretch (polar residues) spans 314–325 (AQDQNPSATLTK). Residues 337–356 (LGPPGPDPCSWPPVPAPSSR) show a composition bias toward pro residues. The span at 398 to 410 (TSCSSTASTSSFS) shows a compositional bias: low complexity. The segment at 519-536 (RRTVEFRDSSLPRSRRPS) is required for nuclear localization. Low complexity predominate over residues 538-548 (GARATAGRTLP). Residues 572–581 (LLEEEEEGDQ) show a composition bias toward acidic residues.

As to quaternary structure, interacts (via proline-rich region) with GRB2 (via SH3 domain 2). Interacts (via N-terminus) with CBX5.

The protein localises to the chromosome. The protein resides in the nucleus. Its subcellular location is the nucleus lamina. It is found in the nucleoplasm. Functionally, functions in tethering peripheral heterochromatin to the nuclear lamina during interphase, possibly through the interaction with heterochromatin protein CBX5/HP1 alpha. Might play a role in reattaching heterochromatin to the nuclear lamina at mitotic exit. Promotes myoblast differentiation during skeletal myogenesis, possibly by stimulating transcription factor MyoD activity via binding to CBX5/HP1 alpha. Involved in the positive regulation of the PI3K-Akt-mTOR signaling pathway and in promoting cell proliferation, possibly via binding to GRB2. The polypeptide is Proline-rich protein 14 (PRR14) (Bos taurus (Bovine)).